The following is a 539-amino-acid chain: Acid-sensing ion channel 4 (539 aa).

Over 1 to 68 the chain is Cytoplasmic; the sequence is MPIEIVCKIK…GPGPHGLRRT (68 aa). The helical transmembrane segment at 69-89 threads the bilayer; sequence LWVLALLTSLAAFLYQAASLA. Residues 90 to 438 are Extracellular-facing; it reads RGYLTRPHLV…EQRAAYGLSA (349 aa). Disulfide bonds link C118/C202 and C180/C187. N-linked (GlcNAc...) asparagine glycans are attached at residues N191, N243, N341, and N376. 5 disulfides stabilise this stretch: C296/C375, C318/C371, C322/C369, C331/C353, and C333/C345. The chain crosses the membrane as a helical span at residues 439–459; that stretch reads LLGDLGGQMGLFIGASILTLL. The GAS motif; ion selectivity filter signature appears at 452-454; sequence GAS. Over 460–539 the chain is Cytoplasmic; sequence EILDYIYEVS…PGSLFEDFAC (80 aa). Residues 501 to 531 are disordered; it reads EQSPCPNRGRAEGGGASNLLPNHHHPHGPPG.

The protein belongs to the amiloride-sensitive sodium channel (TC 1.A.6) family. ASIC4 subfamily. As to quaternary structure, homotrimer. Heterotrimer; with other ASIC proteins producing functional channels. Expressed in brain, spinal cord and dorsal root ganglion (DRG). Expressed by a subset of sensory neurons in the DRG. Expressed by granule cells in the cerebellar cortex. In hippocampus, expression is detected in dentate gyrus granule cells, in pyramidal cells of CA1-CA3 subfields and in interneurons of the striatum oriens and radiatum of all subfields. In cerebral cortex expressed in small, medium and large pyramidal cells in layers 2, 3 and 5 respectively. Also expressed in striatum, globus pallidus, inferior and superior calliculi, amygdala, magnocellular preoptic nucleus, islands of Calleja and large neurons of olfactory tubercules.

It localises to the cell membrane. Its function is as follows. Does not exhibit measurable stand-alone pH-gated sodium channel activity but may form pH-gated heterotrimeric sodium channels. Its activity could also depend on alternative gating mechanisms. This is Acid-sensing ion channel 4 from Rattus norvegicus (Rat).